Here is a 404-residue protein sequence, read N- to C-terminus: Glucose-1-phosphate adenylyltransferase (404 aa).

Alpha-D-glucose 1-phosphate-binding positions include Y99, G164, 179-180, and S197; that span reads EK.

This sequence belongs to the bacterial/plant glucose-1-phosphate adenylyltransferase family. As to quaternary structure, homotetramer.

It carries out the reaction alpha-D-glucose 1-phosphate + ATP + H(+) = ADP-alpha-D-glucose + diphosphate. It functions in the pathway glycan biosynthesis; glycogen biosynthesis. Functionally, involved in the biosynthesis of ADP-glucose, a building block required for the elongation reactions to produce glycogen. Catalyzes the reaction between ATP and alpha-D-glucose 1-phosphate (G1P) to produce pyrophosphate and ADP-Glc. The chain is Glucose-1-phosphate adenylyltransferase from Rhodococcus jostii (strain RHA1).